We begin with the raw amino-acid sequence, 241 residues long: MILYPAIDLKDGQCVRLLHGDMEKATVFNNSPADQAERFVRDGFSWLHVVDLNGAIEGKSVNTAAVQSILESISIPVQLGGGIRTLEGVEAWIEAGVSRVILGTVAVHDPDLVRKAARLWPEQIAVAVDVRDGKVAVDGWTGLSDLDAITLGKRFEDVGVAALIVTDISRDGALTGVNVEGVGELADAVSIPVIASGGVASVADIERLKARPGVEIAGAILGRSLYAGTIRPAEALTIAAA.

Aspartate 8 acts as the Proton acceptor in catalysis. Aspartate 129 functions as the Proton donor in the catalytic mechanism.

The protein belongs to the HisA/HisF family.

The protein localises to the cytoplasm. It catalyses the reaction 1-(5-phospho-beta-D-ribosyl)-5-[(5-phospho-beta-D-ribosylamino)methylideneamino]imidazole-4-carboxamide = 5-[(5-phospho-1-deoxy-D-ribulos-1-ylimino)methylamino]-1-(5-phospho-beta-D-ribosyl)imidazole-4-carboxamide. The protein operates within amino-acid biosynthesis; L-histidine biosynthesis; L-histidine from 5-phospho-alpha-D-ribose 1-diphosphate: step 4/9. This Caulobacter sp. (strain K31) protein is 1-(5-phosphoribosyl)-5-[(5-phosphoribosylamino)methylideneamino] imidazole-4-carboxamide isomerase.